The chain runs to 957 residues: Leucine--tRNA ligase (957 aa).

The 'HIGH' region signature appears at 70–81 (PYPSGAGLHVGH). The short motif at 727-731 (KMGKS) is the 'KMSKS' region element. K730 is a binding site for ATP.

The protein belongs to the class-I aminoacyl-tRNA synthetase family.

It is found in the cytoplasm. It carries out the reaction tRNA(Leu) + L-leucine + ATP = L-leucyl-tRNA(Leu) + AMP + diphosphate. In Corynebacterium efficiens (strain DSM 44549 / YS-314 / AJ 12310 / JCM 11189 / NBRC 100395), this protein is Leucine--tRNA ligase.